A 104-amino-acid chain; its full sequence is Flagellar hook-basal body complex protein FliE (104 aa).

This sequence belongs to the FliE family.

The protein resides in the bacterial flagellum basal body. This is Flagellar hook-basal body complex protein FliE from Salmonella arizonae (strain ATCC BAA-731 / CDC346-86 / RSK2980).